The primary structure comprises 384 residues: Succinyl-diaminopimelate desuccinylase (384 aa).

Histidine 69 provides a ligand contact to Zn(2+). Aspartate 71 is an active-site residue. Aspartate 103 provides a ligand contact to Zn(2+). The active-site Proton acceptor is glutamate 137. Positions 138, 166, and 355 each coordinate Zn(2+).

It belongs to the peptidase M20A family. DapE subfamily. Homodimer. It depends on Zn(2+) as a cofactor. Co(2+) serves as cofactor.

The enzyme catalyses N-succinyl-(2S,6S)-2,6-diaminopimelate + H2O = (2S,6S)-2,6-diaminopimelate + succinate. The protein operates within amino-acid biosynthesis; L-lysine biosynthesis via DAP pathway; LL-2,6-diaminopimelate from (S)-tetrahydrodipicolinate (succinylase route): step 3/3. Catalyzes the hydrolysis of N-succinyl-L,L-diaminopimelic acid (SDAP), forming succinate and LL-2,6-diaminopimelate (DAP), an intermediate involved in the bacterial biosynthesis of lysine and meso-diaminopimelic acid, an essential component of bacterial cell walls. This is Succinyl-diaminopimelate desuccinylase from Rickettsia canadensis (strain McKiel).